Consider the following 670-residue polypeptide: Segment polarity protein dishevelled homolog DVL-1 (670 aa).

Residues 1 to 85 (MAETKIIYHM…RVVSWLVLAE (85 aa)) form the DIX domain. The interval 89–237 (SDAGSQGTDS…LRQADRASSF (149 aa)) is disordered. Over residues 142–151 (SHRRERARRR) the composition is skewed to basic residues. Basic and acidic residues predominate over residues 152 to 171 (NREEAARTNGHPRGDRRRDV). The span at 176–192 (DSASTALSSELESSSFV) shows a compositional bias: low complexity. Phosphoserine is present on Ser-194. A compositionally biased stretch (low complexity) spans 200-214 (TSRLSSSTEQSTSSR). Positions 215–228 (LIRKHKRRRRKQRL) are enriched in basic residues. The PDZ domain occupies 251–323 (TVTLNMERHH…NDDAVRVLRE (73 aa)). The DEP domain occupies 400–474 (PDSGLEIRDR…SEQCYYVFGD (75 aa)). Residues 518–642 (PGPPPCFPPA…PGGPPVRELA (125 aa)) are disordered. Positions 526-555 (PAYQDPGFSYGSGSTGSQQSEGSKSSGSTR) are enriched in low complexity. The span at 600–611 (SRGSSPRSQASA) shows a compositional bias: polar residues.

This sequence belongs to the DSH family. Interacts with CXXC4. Interacts (via PDZ domain) with NXN. Interacts with BRD7 and INVS. Interacts (via PDZ domain) with VANGL1 and VANGL2 (via C-terminus). Interacts with ARRB1; the interaction is enhanced by phosphorylation of DVL1. Interacts with CYLD. Interacts (via PDZ domain) with RYK. Self-associates (via DIX domain) and forms higher homooligomers. Interacts (via PDZ domain) with DACT1 and FZD7, where DACT1 and FZD7 compete for the same binding site. Interacts (via DEP domain) with MUSK; the interaction is direct and mediates the formation a DVL1, MUSK and PAK1 ternary complex involved in AChR clustering. Interacts (via PDZ domain) with TMEM88. Interacts with DCDC2. Interacts with FOXK2. Interacts with PKD1 (via extracellular domain). Interacts (via PDZ domain) with CCDC88C/DAPLE; competes with CCDC88C for binding to frizzled receptor FZD7 and dissociates from CCDC88C following initiation of non-canonical Wnt signaling when CCDC88C displaces DVL1 from ligand-activated FZD7. Ubiquitinated; undergoes both 'Lys-48'-linked ubiquitination, leading to its subsequent degradation by the ubiquitin-proteasome pathway, and 'Lys-63'-linked ubiquitination. The interaction with INVS is required for ubiquitination. Deubiquitinated by CYLD, which acts on 'Lys-63'-linked ubiquitin chains.

Its subcellular location is the cell membrane. The protein resides in the cytoplasm. It is found in the cytosol. It localises to the cytoplasmic vesicle. Its function is as follows. Participates in Wnt signaling by binding to the cytoplasmic C-terminus of frizzled family members and transducing the Wnt signal to down-stream effectors. Plays a role both in canonical and non-canonical Wnt signaling. Plays a role in the signal transduction pathways mediated by multiple Wnt genes. Required for LEF1 activation upon WNT1 and WNT3A signaling. DVL1 and PAK1 form a ternary complex with MUSK which is important for MUSK-dependent regulation of AChR clustering during the formation of the neuromuscular junction (NMJ). The protein is Segment polarity protein dishevelled homolog DVL-1 (DVL1) of Pan troglodytes (Chimpanzee).